Consider the following 528-residue polypeptide: Tyrosine--tRNA ligase, cytoplasmic (528 aa).

The residue at position 1 (Met-1) is an N-acetylmethionine. Gly-2 is subject to N-acetylglycine; in Tyrosine--tRNA ligase, cytoplasmic, N-terminally processed. Tyr-39 serves as a coordination point for L-tyrosine. Position 39 (Tyr-39) interacts with trans-resveratrol. The 'HIGH' region signature appears at 44–52 (TTGKPHVAY). Residues Tyr-166, Gln-170, Asp-173, and Gln-188 each contribute to the L-tyrosine site. 2 residues coordinate trans-resveratrol: Gln-170 and Asp-173. N6-acetyllysine is present on Lys-197. Ser-205 bears the Phosphoserine mark. At Lys-206 the chain carries N6-acetyllysine. Positions 222–226 (KMSSS) match the 'KMSKS' region motif. A Nuclear localization signal motif is present at residues 242 to 247 (KKKLKK). The interval 339–363 (AAYPDPSKQKPMAKGPAKNSEPEEV) is disordered. In terms of domain architecture, tRNA-binding spans 364-468 (IPSRLDIRVG…AGSAPGEHVF (105 aa)). Ser-386 bears the Phosphoserine mark. An N6-acetyllysine mark is found at Lys-474, Lys-482, and Lys-490.

The protein belongs to the class-I aminoacyl-tRNA synthetase family. Homodimer. Interacts (when binding to resveratrol) with PARP1; interaction stimulates the poly-ADP-ribosyltransferase activity of PARP1.

The protein resides in the cytoplasm. It localises to the nucleus. It carries out the reaction tRNA(Tyr) + L-tyrosine + ATP = L-tyrosyl-tRNA(Tyr) + AMP + diphosphate + H(+). Resveratrol strongly inhibits the tyrosine--tRNA ligase activity. In terms of biological role, tyrosine--tRNA ligase that catalyzes the attachment of tyrosine to tRNA(Tyr) in a two-step reaction: tyrosine is first activated by ATP to form Tyr-AMP and then transferred to the acceptor end of tRNA(Tyr). Also acts as a positive regulator of poly-ADP-ribosylation in the nucleus, independently of its tyrosine--tRNA ligase activity. Activity is switched upon resveratrol-binding: resveratrol strongly inhibits the tyrosine--tRNA ligase activity and promotes relocalization to the nucleus, where YARS1 specifically stimulates the poly-ADP-ribosyltransferase activity of PARP1. In Homo sapiens (Human), this protein is Tyrosine--tRNA ligase, cytoplasmic.